Reading from the N-terminus, the 139-residue chain is Transcription antitermination protein NusB (139 aa).

This sequence belongs to the NusB family.

Involved in transcription antitermination. Required for transcription of ribosomal RNA (rRNA) genes. Binds specifically to the boxA antiterminator sequence of the ribosomal RNA (rrn) operons. The sequence is that of Transcription antitermination protein NusB from Idiomarina loihiensis (strain ATCC BAA-735 / DSM 15497 / L2-TR).